Reading from the N-terminus, the 162-residue chain is MHMRLVVIAIGRLKQGPERQLAERYRERFDDIGRKLGFRGLDIHEIPESRARDAATRMAEEAAAIAAAIPDNSMLVCLDERGHNIDSATFAGHIGRWRDEGVAATAFVIGGADGLSPELRRKAKLGVAFGAATWPHQIVRVLLLEQIYRTATILAGHPYHRA.

The S-adenosyl-L-methionine site is built by Leu78 and Gly110.

Belongs to the RNA methyltransferase RlmH family. As to quaternary structure, homodimer.

The protein resides in the cytoplasm. It carries out the reaction pseudouridine(1915) in 23S rRNA + S-adenosyl-L-methionine = N(3)-methylpseudouridine(1915) in 23S rRNA + S-adenosyl-L-homocysteine + H(+). Specifically methylates the pseudouridine at position 1915 (m3Psi1915) in 23S rRNA. This Bradyrhizobium sp. (strain ORS 278) protein is Ribosomal RNA large subunit methyltransferase H.